The primary structure comprises 364 residues: Peptidyl-prolyl cis-trans isomerase D (364 aa).

The region spanning 7–170 (YFDITIGNKP…EDAVIAKCGE (164 aa)) is the PPIase cyclophilin-type domain. 3 TPR repeats span residues 208-241 (ATHLKDIGNTYFKKGDHANAAKKYLKAIRYLNEK), 261-294 (IPCYLNRSMCALKLGEYSECVKVTTTVLEYDSKY), and 301-334 (TKAYFRRGSAKMNTRDFEGAIEDFEKAHEKDPED).

This sequence belongs to the cyclophilin-type PPIase family. PPIase D subfamily.

The protein resides in the cytoplasm. It carries out the reaction [protein]-peptidylproline (omega=180) = [protein]-peptidylproline (omega=0). In terms of biological role, PPIases accelerate the folding of proteins. It catalyzes the cis-trans isomerization of proline imidic peptide bonds in oligopeptides. The protein is Peptidyl-prolyl cis-trans isomerase D (cyp12) of Rhizopus delemar (strain RA 99-880 / ATCC MYA-4621 / FGSC 9543 / NRRL 43880) (Mucormycosis agent).